A 243-amino-acid polypeptide reads, in one-letter code: uncharacterized protein (243 aa).

The tract at residues 157-181 is disordered; it reads SEETKEQPDATTSEKSRSPECPKTT.

This is an uncharacterized protein from Rattus norvegicus (Rat).